The primary structure comprises 269 residues: Imidazoleglycerol-phosphate dehydratase 1, chloroplastic (269 aa).

Disordered stretches follow at residues 1-31 (MTTAPFVSPSLPRLHSARASPFPKPSVGSGG) and 54-73 (SGVGGNGSPMAPEESTVSSR). A chloroplast-targeting transit peptide spans 1 to 52 (MTTAPFVSPSLPRLHSARASPFPKPSVGSGGGVAFPARTYGSSLRLRSAVMS). Residues E83, 109–117 (HMLDQLASH), 135–139 (HHSNE), R161, and R183 each bind substrate. Residues H109, H135, H136, and E139 each contribute to the Mn(2+) site. Residues H207, H231, H232, and E235 each contribute to the Mn(2+) site. Substrate contacts are provided by residues 231 to 239 (HHIIEATFK) and 261 to 263 (SSK).

The protein belongs to the imidazoleglycerol-phosphate dehydratase family. Requires Mn(2+) as cofactor.

The protein localises to the plastid. It localises to the chloroplast. It catalyses the reaction D-erythro-1-(imidazol-4-yl)glycerol 3-phosphate = 3-(imidazol-4-yl)-2-oxopropyl phosphate + H2O. It participates in amino-acid biosynthesis; L-histidine biosynthesis; L-histidine from 5-phospho-alpha-D-ribose 1-diphosphate: step 6/9. In Triticum aestivum (Wheat), this protein is Imidazoleglycerol-phosphate dehydratase 1, chloroplastic.